We begin with the raw amino-acid sequence, 71 residues long: Sec-independent protein translocase protein TatA (71 aa).

A helical transmembrane segment spans residues 1 to 21 (MGSFSMWHWLIVLAIVLLLFG). The tract at residues 40 to 71 (KKGMSDDDTAPDGTPKPADQSKTVDHRADDHK) is disordered. Positions 61 to 71 (KTVDHRADDHK) are enriched in basic and acidic residues.

This sequence belongs to the TatA/E family. In terms of assembly, the Tat system comprises two distinct complexes: a TatABC complex, containing multiple copies of TatA, TatB and TatC subunits, and a separate TatA complex, containing only TatA subunits. Substrates initially bind to the TatABC complex, which probably triggers association of the separate TatA complex to form the active translocon.

Its subcellular location is the cell inner membrane. Its function is as follows. Part of the twin-arginine translocation (Tat) system that transports large folded proteins containing a characteristic twin-arginine motif in their signal peptide across membranes. TatA could form the protein-conducting channel of the Tat system. The sequence is that of Sec-independent protein translocase protein TatA from Allorhizobium ampelinum (strain ATCC BAA-846 / DSM 112012 / S4) (Agrobacterium vitis (strain S4)).